The sequence spans 1097 residues: DNA-directed RNA polymerase subunit beta (1097 aa).

Positions 1073-1097 (DVNPRRSTPSRPTYESLGVADYDED) are disordered.

The protein belongs to the RNA polymerase beta chain family. In terms of assembly, in cyanobacteria the RNAP catalytic core is composed of 2 alpha, 1 beta, 1 beta', 1 gamma and 1 omega subunit. When a sigma factor is associated with the core the holoenzyme is formed, which can initiate transcription.

It carries out the reaction RNA(n) + a ribonucleoside 5'-triphosphate = RNA(n+1) + diphosphate. DNA-dependent RNA polymerase catalyzes the transcription of DNA into RNA using the four ribonucleoside triphosphates as substrates. This chain is DNA-directed RNA polymerase subunit beta, found in Synechococcus sp. (strain CC9311).